The primary structure comprises 538 residues: Phosphoenolpyruvate carboxykinase (ATP) (538 aa).

The substrate site is built by arginine 64, tyrosine 205, and lysine 211. Residues lysine 211, histidine 230, and 246–254 (GLSGTGKTT) contribute to the ATP site. Mn(2+) is bound by residues lysine 211 and histidine 230. Mn(2+) is bound at residue aspartate 267. ATP contacts are provided by residues glutamate 295, arginine 331, 447-448 (RI), and threonine 453. Arginine 331 serves as a coordination point for substrate.

This sequence belongs to the phosphoenolpyruvate carboxykinase (ATP) family. As to quaternary structure, monomer. The cofactor is Mn(2+).

The protein localises to the cytoplasm. The catalysed reaction is oxaloacetate + ATP = phosphoenolpyruvate + ADP + CO2. Its pathway is carbohydrate biosynthesis; gluconeogenesis. Functionally, involved in the gluconeogenesis. Catalyzes the conversion of oxaloacetate (OAA) to phosphoenolpyruvate (PEP) through direct phosphoryl transfer between the nucleoside triphosphate and OAA. This Haemophilus influenzae (strain ATCC 51907 / DSM 11121 / KW20 / Rd) protein is Phosphoenolpyruvate carboxykinase (ATP).